Reading from the N-terminus, the 208-residue chain is Ectodysplasin-A receptor-associated adapter protein (208 aa).

Residues 1–18 (MASPDDPLRSDHMAKEPV) are compositionally biased toward basic and acidic residues. Residues 1-99 (MASPDDPLRS…KGSCSCPSCS (99 aa)) are disordered. A compositionally biased stretch (polar residues) spans 49 to 61 (TVNSNCPPNSDDQ). Residues 116 to 195 (DTIRIKLDPC…KILRRWVDEE (80 aa)) form the Death domain.

In terms of assembly, binds EDAR. Self-associates and binds TRAF1, TRAF2 and TRAF3.

Its subcellular location is the cytoplasm. In terms of biological role, adapter protein that interacts with EDAR DEATH domain and couples the receptor to EDA signaling pathway during morphogenesis of ectodermal organs. Mediates the activation of NF-kappa-B. The protein is Ectodysplasin-A receptor-associated adapter protein (Edaradd) of Mus musculus (Mouse).